Reading from the N-terminus, the 95-residue chain is uncharacterized protein (95 aa).

Belongs to the asfivirus DP96R family.

This is an uncharacterized protein from African swine fever virus (isolate Warthog/Namibia/Wart80/1980) (ASFV).